The following is a 346-amino-acid chain: 4-amino-5-hydroxymethyl-2-methylpyrimidine phosphate synthase (346 aa).

An N6-(pyridoxal phosphate)lysine modification is found at Lys-62. The active site involves His-66. Pyridoxal 5'-phosphate is bound at residue 114 to 117 (GEFG). A CCCFC; essential for catalytic activity, may be the site of iron coordination motif is present at residues 194 to 198 (CCCFC).

The protein belongs to the NMT1/THI5 family. In terms of assembly, homodimer. Requires Fe cation as cofactor.

It is found in the cytoplasm. Its subcellular location is the nucleus. The catalysed reaction is N(6)-(pyridoxal phosphate)-L-lysyl-[4-amino-5-hydroxymethyl-2-methylpyrimidine phosphate synthase] + L-histidyl-[4-amino-5-hydroxymethyl-2-methylpyrimidine phosphate synthase] + 2 Fe(3+) + 4 H2O = L-lysyl-[4-amino-5-hydroxymethyl-2-methylpyrimidine phosphate synthase] + (2S)-2-amino-5-hydroxy-4-oxopentanoyl-[4-amino-5-hydroxymethyl-2-methylpyrimidine phosphate synthase] + 4-amino-2-methyl-5-(phosphooxymethyl)pyrimidine + 3-oxopropanoate + 2 Fe(2+) + 2 H(+). Its pathway is cofactor biosynthesis; thiamine diphosphate biosynthesis. Functionally, responsible for the formation of the pyrimidine heterocycle in the thiamine biosynthesis pathway. Catalyzes the formation of hydroxymethylpyrimidine phosphate (HMP-P) from histidine and pyridoxal phosphate (PLP). The protein uses PLP and the active site histidine to form HMP-P, generating an inactive enzyme. The enzyme can only undergo a single turnover, which suggests it is a suicide enzyme. The chain is 4-amino-5-hydroxymethyl-2-methylpyrimidine phosphate synthase from Schizosaccharomyces pombe (strain 972 / ATCC 24843) (Fission yeast).